Consider the following 244-residue polypeptide: uncharacterized protein (244 aa).

6 helical membrane passes run 21–41 (FPYS…YGIY), 44–64 (ALGF…AGSV), 66–86 (FIAA…LITL), 139–159 (WYMF…AAMG), 165–185 (VLPF…LVIF), and 199–219 (LLGL…YFLI).

The protein belongs to the AzlC family.

The protein localises to the cell membrane. This is an uncharacterized protein from Haemophilus influenzae (strain ATCC 51907 / DSM 11121 / KW20 / Rd).